Reading from the N-terminus, the 185-residue chain is Transmembrane protein 252 (185 aa).

Transmembrane regions (helical) follow at residues 8-28 (VLCALSLLTGFLMICLGGFFI) and 39-59 (LVVAYVLLPLGFVILLSGIFW). The interval 125 to 149 (YTETSLEPQDKDKNDPQPEAPPPYP) is disordered.

The protein resides in the membrane. The polypeptide is Transmembrane protein 252 (Tmem252) (Rattus norvegicus (Rat)).